The primary structure comprises 860 residues: Serine/threonine-protein kinase greatwall (860 aa).

One can recognise a Protein kinase domain in the interval 23-816 (FVLVKPISRG…LKELKDHPFF (794 aa)). ATP-binding positions include 29–37 (ISRGAFGKV) and lysine 52. Aspartate 146 serves as the catalytic Proton acceptor. A disordered region spans residues 514 to 537 (QGEEGGKAEPNSSSSTSPGDERNI). Threonine 722 carries the phosphothreonine; by CDK1 modification. One can recognise an AGC-kinase C-terminal domain in the interval 817–860 (DGVDWENLHHQTMPFIPQPDNETDTSYFEARNTAQHLTVSGFSL).

Belongs to the protein kinase superfamily. AGC Ser/Thr protein kinase family. Phosphorylation at Thr-722 by CDK1 during M phase activates its kinase activity. Maximum phosphorylation occurs in prometaphase.

It localises to the cytoplasm. It is found in the cytoskeleton. The protein localises to the microtubule organizing center. Its subcellular location is the centrosome. The protein resides in the nucleus. It localises to the cleavage furrow. It carries out the reaction L-seryl-[protein] + ATP = O-phospho-L-seryl-[protein] + ADP + H(+). It catalyses the reaction L-threonyl-[protein] + ATP = O-phospho-L-threonyl-[protein] + ADP + H(+). In terms of biological role, serine/threonine kinase that plays a key role in M phase by acting as a regulator of mitosis entry and maintenance. Acts by promoting the inactivation of protein phosphatase 2A (PP2A) during M phase: does not directly inhibit PP2A but acts by mediating phosphorylation and subsequent activation of arpp19 and ensa at 'Ser-62' and 'Ser-74', respectively. ARPP19 and ENSA are phosphatase inhibitors that specifically inhibit the ppp2r2d (PR55-delta) subunit of PP2A. Inactivation of PP2A during M phase is essential to keep cyclin-B1-CDK1 activity high. Following DNA damage, it is also involved in checkpoint recovery by being inhibited. May be involved in megakaryocyte differentiation. This chain is Serine/threonine-protein kinase greatwall (mastl), found in Danio rerio (Zebrafish).